The following is a 205-amino-acid chain: Small ribosomal subunit protein uS5 (205 aa).

A disordered region spans residues 1-25 (MSGAQRGQRGGERRGGRDDRRGQGA). Positions 9–24 (RGGERRGGRDDRRGQG) are enriched in basic and acidic residues. The S5 DRBM domain maps to 30-93 (YIERVVAINR…EEAKKHFFRV (64 aa)).

This sequence belongs to the universal ribosomal protein uS5 family. In terms of assembly, part of the 30S ribosomal subunit. Contacts proteins S4 and S8.

Functionally, with S4 and S12 plays an important role in translational accuracy. Its function is as follows. Located at the back of the 30S subunit body where it stabilizes the conformation of the head with respect to the body. This Nocardioides sp. (strain ATCC BAA-499 / JS614) protein is Small ribosomal subunit protein uS5.